The following is a 213-amino-acid chain: Ribosomal RNA small subunit methyltransferase G (213 aa).

S-adenosyl-L-methionine is bound by residues Gly55, 105 to 106 (AE), and Arg124.

The protein belongs to the methyltransferase superfamily. RNA methyltransferase RsmG family.

Its subcellular location is the cytoplasm. In terms of biological role, specifically methylates the N7 position of a guanine in 16S rRNA. This is Ribosomal RNA small subunit methyltransferase G from Fervidobacterium nodosum (strain ATCC 35602 / DSM 5306 / Rt17-B1).